Consider the following 212-residue polypeptide: Probable GTP-binding protein EngB (212 aa).

One can recognise an EngB-type G domain in the interval 38–210 (SLPEIAFVGK…KASLAKCIKP (173 aa)). Residues 46-53 (GKSNVGKS), 73-77 (GRTRQ), 91-94 (DLPG), 158-161 (TKSD), and 189-191 (VSN) contribute to the GTP site. Mg(2+) is bound by residues S53 and T75.

This sequence belongs to the TRAFAC class TrmE-Era-EngA-EngB-Septin-like GTPase superfamily. EngB GTPase family. Requires Mg(2+) as cofactor.

In terms of biological role, necessary for normal cell division and for the maintenance of normal septation. In Rickettsia conorii (strain ATCC VR-613 / Malish 7), this protein is Probable GTP-binding protein EngB.